The sequence spans 149 residues: Cytochrome c-type biogenesis protein CcmE (149 aa).

Topologically, residues 1–7 (MKPRHKK) are cytoplasmic. A helical; Signal-anchor for type II membrane protein membrane pass occupies residues 8–28 (MAVIALSVSALTVAVVLVLNA). Residues 29 to 149 (FQSNLVFFFS…AKAQKTSLAQ (121 aa)) are Periplasmic-facing. Heme contacts are provided by His123 and Tyr127.

The protein belongs to the CcmE/CycJ family.

The protein localises to the cell inner membrane. Heme chaperone required for the biogenesis of c-type cytochromes. Transiently binds heme delivered by CcmC and transfers the heme to apo-cytochromes in a process facilitated by CcmF and CcmH. The chain is Cytochrome c-type biogenesis protein CcmE from Nitrosomonas europaea (strain ATCC 19718 / CIP 103999 / KCTC 2705 / NBRC 14298).